A 166-amino-acid chain; its full sequence is Protein phosphatase 1 regulatory subunit 1A (166 aa).

At M1 the chain carries N-acetylmethionine. Residues 1–166 (MEQDNSPRKI…SQDSQGASAV (166 aa)) form a disordered region. Residues 9-12 (KIQF) form an essential for activity region. A compositionally biased stretch (basic and acidic residues) spans 19 to 29 (PHLDPEAAEQI). T35 carries the phosphothreonine; by PKA modification. Residues 42–54 (TSDQSSPEVDEDR) form an essential for activity region. Phosphoserine is present on residues S43, S46, S47, and S67. The segment covering 104 to 114 (AAEGTGAQESQ) has biased composition (low complexity). The segment covering 143-152 (AQERRGEEPS) has biased composition (basic and acidic residues). Residues 143 to 166 (AQERRGEEPSTAKTSQDSQGASAV) are interaction with PPP1R15A. A compositionally biased stretch (polar residues) spans 153–166 (TAKTSQDSQGASAV).

This sequence belongs to the protein phosphatase inhibitor 1 family. In terms of assembly, interacts with PPP1R15A. Post-translationally, phosphorylation of Thr-35 is required for activity.

Functionally, inhibitor of protein-phosphatase 1. This protein may be important in hormonal control of glycogen metabolism. Hormones that elevate intracellular cAMP increase I-1 activity in many tissues. I-1 activation may impose cAMP control over proteins that are not directly phosphorylated by PKA. Following a rise in intracellular calcium, I-1 is inactivated by calcineurin (or PP2B). Does not inhibit type-2 phosphatases. The chain is Protein phosphatase 1 regulatory subunit 1A (PPP1R1A) from Oryctolagus cuniculus (Rabbit).